The chain runs to 453 residues: Cytochrome P450 monooxygenase CYP2 (453 aa).

The chain crosses the membrane as a helical span at residues 13–29; that stretch reads MVITMLHGSSTYSLLAS. N-linked (GlcNAc...) asparagine glycosylation occurs at Asn85. Cys397 provides a ligand contact to heme.

This sequence belongs to the cytochrome P450 family. Heme is required as a cofactor.

The protein resides in the membrane. It functions in the pathway secondary metabolite biosynthesis. Functionally, cytochrome P450 monooxygenase; part of the gene cluster that mediates the biosynthesis of a tyrosine-derived cytochalasan acting as a fungal signal recognized by resistant rice plants and leads to avirulence in Pi33 resistant rice cultivars. The first step in the pathway is catalyzed by the hybrid PKS-NRPS ACE1, assisted by the enoyl reductase RAP1, that are responsible for fusion of the tyrosine precursor and the polyketide backbone. The polyketide synthase module (PKS) of ACE1 is responsible for the synthesis of the polyketide backbone and the downstream nonribosomal peptide synthetase (NRPS) amidates the carboxyl end of the polyketide with the tyrosine precursor. Because ACE1 lacks a designated enoylreductase (ER) domain, the required activity is provided the enoyl reductase RAP1. Reduction by the hydrolyase ORFZ, followed by dehydration and intra-molecular Diels-Alder cyclization by the Diels-Alderase ORF3 then yield the required isoindolone-fused macrocycle. A number of oxidative steps catalyzed by the tailoring enzymes identified within the cluster, including cytochrome P450 monooxygenases CYP1 to CYP4, the FAD-linked oxidoreductase OXR2 and the short-chain dehydrogenase/reductase OXR1, are further required to afford the final cytochalasans that confer avirulence and which have still to be identified. The monooxygenase CYP1 has been shown to be a site-selective C-18 hydroxylase whereas the function of CYP3 is the site-selective epoxidation of the C-6/C-7 olefin that is present in some intermediate compounds. Finally, SYN2 and RAP2 are not required for avirulence in Pi33 resistant rice cultivars. This Pyricularia oryzae (strain 70-15 / ATCC MYA-4617 / FGSC 8958) (Rice blast fungus) protein is Cytochrome P450 monooxygenase CYP2.